Reading from the N-terminus, the 448-residue chain is Portal protein (448 aa).

The disordered stretch occupies residues 1-25 (MAKRGRKPKELVPGPGSIDPSDVPK).

It belongs to the P23virus portal protein family. Homododecamer. Interacts with the capsid protein. Interacts with the terminase large subunit; this interaction allows the packaging of viral DNA.

The protein resides in the virion. In terms of biological role, forms the portal vertex of the capsid. This portal plays critical roles in head assembly, genome packaging, neck/tail attachment, and genome ejection. The portal protein multimerizes as a single ring-shaped homododecamer arranged around a central channel. Forms the portal vertex of the capsid. This portal plays critical roles in head assembly, genome packaging, neck/tail attachment, and genome ejection. In Thermus thermophilus (Thermus thermophilus phage P23-45), this protein is Portal protein.